A 303-amino-acid polypeptide reads, in one-letter code: UDP-3-O-acyl-N-acetylglucosamine deacetylase (303 aa).

The Zn(2+) site is built by His78, His237, and Asp241. The Proton donor role is filled by His264.

Belongs to the LpxC family. Zn(2+) is required as a cofactor.

It catalyses the reaction a UDP-3-O-[(3R)-3-hydroxyacyl]-N-acetyl-alpha-D-glucosamine + H2O = a UDP-3-O-[(3R)-3-hydroxyacyl]-alpha-D-glucosamine + acetate. The protein operates within glycolipid biosynthesis; lipid IV(A) biosynthesis; lipid IV(A) from (3R)-3-hydroxytetradecanoyl-[acyl-carrier-protein] and UDP-N-acetyl-alpha-D-glucosamine: step 2/6. Functionally, catalyzes the hydrolysis of UDP-3-O-myristoyl-N-acetylglucosamine to form UDP-3-O-myristoylglucosamine and acetate, the committed step in lipid A biosynthesis. This Teredinibacter turnerae (strain ATCC 39867 / T7901) protein is UDP-3-O-acyl-N-acetylglucosamine deacetylase.